The primary structure comprises 477 residues: Mitochondrial adenyl nucleotide antiporter SLC25A24 (477 aa).

The segment at 1-174 (MHQLIRKFVF…RYWKKSTVLD (174 aa)) is regulatory N-terminal domain. Residues 1-198 (MHQLIRKFVF…EKTTGMWWKQ (198 aa)) are Mitochondrial intermembrane-facing. Residues 20-55 (DNTKSFAELFEKLDVNKDGKVDVSELKTGLAAMGFS) enclose the EF-hand 1 domain. Ca(2+) is bound by residues Asp33, Asn35, Asp37, Lys39, Glu44, Asp69, Asp71, Asp73, Glu80, Asp100, Asn102, Asp104, Arg106, Glu111, Asp136, Asp138, Thr140, Thr142, and Glu147. EF-hand domains are found at residues 87-122 (EHEKKLRLTFKSLDKNEDGRVDAKEIQQSLKDLGIN) and 123-158 (LSDKDAEKILHSIDVDGTMTLDWNEWREHFLFNPAE). The interval 160 to 169 (LQQIIRYWKK) is linker region. The tract at residues 175–477 (IGDSLTIPDE…YMRSGLGISK (303 aa)) is C-terminal transmembrane transporter domain. 3 Solcar repeats span residues 193–279 (GMWW…YKKL), 287–372 (VQSH…LKNT), and 384–472 (PGVL…MRSG). A helical transmembrane segment spans residues 199–216 (LAAGGVAGAVSRTGTAPL). At 217–253 (DRMKVFMQVHSSKTNKISLVNGFKQMIKEGGVASLWR) the chain is on the mitochondrial matrix side. A helical membrane pass occupies residues 254 to 273 (GNGVNVIKIAPETAIKFMAY). At 274–296 (EQYKKLLSKDGGKVQSHERFMAG) the chain is on the mitochondrial intermembrane side. A helical membrane pass occupies residues 297-310 (SLAGATAQTAIYPM). Topologically, residues 311–346 (EVMKTRLTLRKTGQYSGMFDCAKKILRKEGVKAFYK) are mitochondrial matrix. The chain crosses the membrane as a helical span at residues 347–366 (GYVPNILGIIPYAGIDLAVY). The Mitochondrial intermembrane segment spans residues 367-389 (ETLKNTWLSHYAKDTANPGVLVL). A helical membrane pass occupies residues 390-407 (LGCGTISSTCGQLASYPL). The Mitochondrial matrix portion of the chain corresponds to 408 to 446 (ALIRTRMQAMASMEGSEQVSMSKLVKKIMQKEGFFGLYR). A helical transmembrane segment spans residues 447-466 (GILPNFMKVIPAVSISYVVY). The Mitochondrial intermembrane segment spans residues 467-477 (EYMRSGLGISK).

This sequence belongs to the mitochondrial carrier (TC 2.A.29) family. Monomer.

Its subcellular location is the mitochondrion inner membrane. It carries out the reaction Mg(2+)(out) + phosphate(in) + ATP(out) = Mg(2+)(in) + phosphate(out) + ATP(in). It catalyses the reaction ADP(out) + phosphate(in) + H(+)(out) = ADP(in) + phosphate(out) + H(+)(in). The enzyme catalyses AMP(out) + phosphate(in) = AMP(in) + phosphate(out). The catalysed reaction is phosphate(in) + ATP(out) + 2 H(+)(out) = phosphate(out) + ATP(in) + 2 H(+)(in). It carries out the reaction dADP(in) + ADP(out) = dADP(out) + ADP(in). It catalyses the reaction Mg(2+)(in) + ADP(out) + ATP(in) + H(+)(out) = Mg(2+)(out) + ADP(in) + ATP(out) + H(+)(in). The enzyme catalyses ADP(out) + diphosphate(in) = ADP(in) + diphosphate(out). The catalysed reaction is dAMP(in) + ADP(out) + H(+)(out) = dAMP(out) + ADP(in) + H(+)(in). It carries out the reaction 3'-AMP(in) + ADP(out) + H(+)(out) = 3'-AMP(out) + ADP(in) + H(+)(in). It catalyses the reaction dAMP(out) + phosphate(in) = dAMP(in) + phosphate(out). The enzyme catalyses 3'-AMP(out) + phosphate(in) = 3'-AMP(in) + phosphate(out). The catalysed reaction is dADP(out) + phosphate(in) + H(+)(out) = dADP(in) + phosphate(out) + H(+)(in). Activated by an increase in cytosolic calcium levels that induce a conformational change of the N-terminal regulatory domain, uncapping the channel and allowing transport. Inhibited by bathophenanthroline, mersalyl, p-hydroxymercuribenzoate, bromcresol purple and tannic acid. In terms of biological role, electroneutral antiporter that mediates the transport of adenyl nucleotides through the inner mitochondrial membrane. Originally identified as an ATP-magnesium/inorganic phosphate antiporter, it also acts as a broad specificity adenyl nucleotide antiporter. By regulating the mitochondrial matrix adenyl nucleotide pool could adapt to changing cellular energetic demands and indirectly regulate adenyl nucleotide-dependent metabolic pathways. The polypeptide is Mitochondrial adenyl nucleotide antiporter SLC25A24 (slc25a24) (Danio rerio (Zebrafish)).